A 154-amino-acid chain; its full sequence is MAARLCCQLDPARDVLCLRPVGAESRGRPLPGPLGAIPPASPSTVPTDHGAHLSLRGLPVCAFSSAGPCALRFTSARRMETTVNAHRNLPKVLHKRTLGLSVMSTTDLEAYFKDCVFTEWEELGEEMRLKVFVLGGCRHKLVCSPAPCNFFTSA.

The interval 68 to 117 is mitochondrial targeting sequence; that stretch reads PCALRFTSARRMETTVNAHRNLPKVLHKRTLGLSVMSTTDLEAYFKDCVF.

Belongs to the orthohepadnavirus protein X family. May form homodimer. May interact with host CEBPA, CFLAR, CREB1, DDB1, E4F1, HBXIP, HSPD1/HSP60, NFKBIA, POLR2E and SMAD4. Interacts with host SMC5-SMC6 complex and induces its degradation. Interacts with host TRPC4AP; leading to prevent ubiquitination of TRPC4AP. Interacts with host PLSCR1; this interaction promotes ubiquitination and degradation of HBx and impairs HBx-mediated cell proliferation. In terms of processing, a fraction may be phosphorylated in insect cells and HepG2 cells, a human hepatoblastoma cell line. Phosphorylated in vitro by host protein kinase C or mitogen-activated protein kinase. N-acetylated in insect cells.

It localises to the host cytoplasm. Its subcellular location is the host nucleus. The protein resides in the host mitochondrion. Multifunctional protein that plays a role in silencing host antiviral defenses and promoting viral transcription. Does not seem to be essential for HBV infection. May be directly involved in development of cirrhosis and liver cancer (hepatocellular carcinoma). Most of cytosolic activities involve modulation of cytosolic calcium. The effect on apoptosis is controversial depending on the cell types in which the studies have been conducted. May induce apoptosis by localizing in mitochondria and causing loss of mitochondrial membrane potential. May also modulate apoptosis by binding host CFLAR, a key regulator of the death-inducing signaling complex (DISC). Promotes viral transcription by using the host E3 ubiquitin ligase DDB1 to target the SMC5-SMC6 complex to proteasomal degradation. This host complex would otherwise bind to viral episomal DNA, and prevents its transcription. Moderately stimulates transcription of many different viral and cellular transcription elements. Promoters and enhancers stimulated by HBx contain DNA binding sites for NF-kappa-B, AP-1, AP-2, c-EBP, ATF/CREB, or the calcium-activated factor NF-AT. The chain is Protein X from Hepatitis B virus genotype B1 (isolate Japan/Yamagata-2/1998) (HBV-B).